Consider the following 232-residue polypeptide: RNA chaperone ProQ (232 aa).

The interval 105–182 is disordered; that stretch reads EAKARVQAQR…REEQHTPVSD (78 aa). Positions 117-136 are enriched in basic and acidic residues; the sequence is QQAKKREAAAAAGEKEDAPR. Over residues 137 to 146 the composition is skewed to basic residues; it reads RERKPRPTTP. Residues 147-177 show a composition bias toward basic and acidic residues; sequence RRKEGAERKPRAQKPVEKAPKTVKAPREEQH.

It belongs to the ProQ family.

It localises to the cytoplasm. In terms of biological role, RNA chaperone with significant RNA binding, RNA strand exchange and RNA duplexing activities. May regulate ProP activity through an RNA-based, post-transcriptional mechanism. The protein is RNA chaperone ProQ of Shigella boydii serotype 18 (strain CDC 3083-94 / BS512).